A 336-amino-acid polypeptide reads, in one-letter code: Fructose-1,6-bisphosphatase class 1 (336 aa).

Residues glutamate 90, aspartate 112, leucine 114, and aspartate 115 each contribute to the Mg(2+) site. Substrate is bound by residues 115 to 118 (DGSS), asparagine 211, and lysine 277. A Mg(2+)-binding site is contributed by glutamate 283.

This sequence belongs to the FBPase class 1 family. Homotetramer. Mg(2+) is required as a cofactor.

The protein resides in the cytoplasm. The enzyme catalyses beta-D-fructose 1,6-bisphosphate + H2O = beta-D-fructose 6-phosphate + phosphate. Its pathway is carbohydrate biosynthesis; gluconeogenesis. The chain is Fructose-1,6-bisphosphatase class 1 from Stutzerimonas stutzeri (strain A1501) (Pseudomonas stutzeri).